The chain runs to 129 residues: Small ribosomal subunit protein uS13 (129 aa).

Residues 92 to 114 are compositionally biased toward basic residues; that stretch reads HKHNLPVRGQRTKTNARTRRGPR. Residues 92-129 form a disordered region; the sequence is HKHNLPVRGQRTKTNARTRRGPRKTVAGRGQKRGATKK.

The protein belongs to the universal ribosomal protein uS13 family. Part of the 30S ribosomal subunit. Forms a loose heterodimer with protein S19. Forms two bridges to the 50S subunit in the 70S ribosome.

Its function is as follows. Located at the top of the head of the 30S subunit, it contacts several helices of the 16S rRNA. In the 70S ribosome it contacts the 23S rRNA (bridge B1a) and protein L5 of the 50S subunit (bridge B1b), connecting the 2 subunits; these bridges are implicated in subunit movement. Contacts the tRNAs in the A and P-sites. The protein is Small ribosomal subunit protein uS13 of Dehalococcoides mccartyi (strain ATCC BAA-2266 / KCTC 15142 / 195) (Dehalococcoides ethenogenes (strain 195)).